We begin with the raw amino-acid sequence, 470 residues long: Cysteine--tRNA ligase (470 aa).

C28 is a Zn(2+) binding site. The short motif at 30–40 (PTVYNYIHIGN) is the 'HIGH' region element. Residues C212, H237, and E241 each contribute to the Zn(2+) site. Residues 271–275 (KMSKS) carry the 'KMSKS' region motif. K274 contributes to the ATP binding site.

Belongs to the class-I aminoacyl-tRNA synthetase family. In terms of assembly, monomer. Zn(2+) is required as a cofactor.

It is found in the cytoplasm. The catalysed reaction is tRNA(Cys) + L-cysteine + ATP = L-cysteinyl-tRNA(Cys) + AMP + diphosphate. The chain is Cysteine--tRNA ligase from Lactiplantibacillus plantarum (strain ATCC BAA-793 / NCIMB 8826 / WCFS1) (Lactobacillus plantarum).